Here is a 410-residue protein sequence, read N- to C-terminus: MKMEQALNITSEIGKLQTVLVKRPGSELENITPEYLESLLFDDIPYLKMMQKEHDFFAKTMRDSNIEVLYLEKLAAEALREANNKESFLTKMIKESNQMDESALYVRDYLMSFDEEEMIRKLMSGLKKSEIPERKKKHLNEMMDEQYPFFLDPLPNLYFTRDPAAVIGNGVTINRMFQPARRRESIFIELILKHHPRFSNQDIPVWSGRGEPFSLEGGDELVLNEETVLVGVSERTDARAVERLAESLFNRSPKIKRVLAVEIPETRSFMHLDTVFTMVNFAQFTIHPAIQNQQGELNIYILEKSENGLEITPRRDFQRVIAEVLDEPEIDFIPCGGEDVIVSAREQWNDGANTLAIAPGEVITYDRNQVSNDLLRSAGIKVHEVISSELSRGRGGPRCMTMPLVRENLK.

Cys399 acts as the Amidino-cysteine intermediate in catalysis.

This sequence belongs to the arginine deiminase family.

The protein localises to the cytoplasm. The catalysed reaction is L-arginine + H2O = L-citrulline + NH4(+). It participates in amino-acid degradation; L-arginine degradation via ADI pathway; carbamoyl phosphate from L-arginine: step 1/2. The chain is Arginine deiminase from Listeria monocytogenes serovar 1/2a (strain ATCC BAA-679 / EGD-e).